We begin with the raw amino-acid sequence, 352 residues long: C-X-C chemokine receptor type 4 (352 aa).

Residues 1 to 21 (MEGISIYTSDNYTEEMGSGDY) form an important for chemokine binding and signaling region. Residues 1 to 38 (MEGISIYTSDNYTEEMGSGDYDSIKEPCFREENAHFNR) lie on the Extracellular side of the membrane. Tyr-7 bears the Sulfotyrosine mark. N-linked (GlcNAc...) asparagine glycosylation occurs at Asn-11. At Tyr-12 the chain carries Sulfotyrosine. O-linked (Xyl...) (chondroitin sulfate) serine glycosylation occurs at Ser-18. A Sulfotyrosine modification is found at Tyr-21. Disulfide bonds link Cys-28/Cys-274 and Cys-109/Cys-186. The chain crosses the membrane as a helical span at residues 39–63 (IFLPTIYSIIFLTGIVGNGLVILVM). The Cytoplasmic segment spans residues 64–77 (GYQKKLRSMTDKYR). A helical membrane pass occupies residues 78 to 99 (LHLSVADLLFVITLPFWAVDAV). The tract at residues 94-97 (WAVD) is chemokine binding. Over 100 to 110 (ANWYFGNFLCK) the chain is Extracellular. The chain crosses the membrane as a helical span at residues 111–130 (AVHVIYTVNLYSSVLILAFI). The segment at 113–117 (HVIYT) is chemokine binding. Over 131-154 (SLDRYLAIVHATNSQKPRKLLAEK) the chain is Cytoplasmic. Positions 133-135 (DRY) match the Important for signaling motif. The tract at residues 135-147 (YLAIVHATNSQKP) is involved in dimerization; when bound to chemokine. The chain crosses the membrane as a helical span at residues 155 to 174 (VVYVGVWIPALLLTIPDFIF). Topologically, residues 175 to 195 (ASVSEADDRYICDRFYPNDLW) are extracellular. The tract at residues 186-190 (CDRFY) is chemokine binding, important for signaling. Residues 191-210 (PNDLWVVVFQFQHIMVGLIL) form an involved in dimerization region. Residues 196 to 216 (VVVFQFQHIMVGLILPGIDIL) form a helical membrane-spanning segment. The Cytoplasmic segment spans residues 217-241 (SCYCIIISKLSHSKGHQKRKALKTT). Residues 242-261 (VILILAFFACWLPYYIGISI) form a helical membrane-spanning segment. The Extracellular portion of the chain corresponds to 262-282 (DSFILLEIIKQGCEFENTVHK). The interval 266–268 (LLE) is involved in dimerization. Residues 283–302 (WISITEALAFFHCCLNPILY) traverse the membrane as a helical segment. Over 303–352 (AFLGAKFKTSAQHALTSVSRGSSLKILSKGKRGGHSSVSTESESSSFHSS) the chain is Cytoplasmic. Phosphoserine occurs at positions 319 and 321. A phosphoserine; by PKC and GRK6 mark is found at Ser-324 and Ser-325. Residues 329 to 352 (LSKGKRGGHSSVSTESESSSFHSS) are disordered. Position 330 is a phosphoserine; by GRK6 (Ser-330). Lys-331 participates in a covalent cross-link: Glycyl lysine isopeptide (Lys-Gly) (interchain with G-Cter in ubiquitin). Residues 337 to 352 (HSSVSTESESSSFHSS) are compositionally biased toward low complexity. Phosphoserine; by GRK6 is present on Ser-339. Phosphoserine occurs at positions 348 and 351.

The protein belongs to the G-protein coupled receptor 1 family. As to quaternary structure, monomer. Can form homodimers. Interacts with CD164. Interacts with ARRB2; the interaction is dependent on the C-terminal phosphorylation of CXCR4 and allows activation of MAPK1 and MAPK3. Interacts with ARR3; the interaction is dependent on the C-terminal phosphorylation of CXCR4 and modulates calcium mobilization. Interacts with RNF113A; the interaction, enhanced by CXCL12, promotes CXCR4 ubiquitination and subsequent degradation. Interacts (via the cytoplasmic C-terminal) with ITCH (via the WW domains I and II); the interaction, enhanced by CXCL12, promotes CXCR4 ubiquitination and leads to its degradation. Interacts with extracellular ubiquitin. Interacts with DBN1; this interaction is enhanced by antigenic stimulation. Following LPS binding, may form a complex with GDF5, HSP90AA1 and HSPA8. Phosphorylated on agonist stimulation. Rapidly phosphorylated on serine and threonine residues in the C-terminal. Phosphorylation at Ser-324 and Ser-325 leads to recruitment of ITCH, ubiquitination and protein degradation. In terms of processing, ubiquitinated after ligand binding, leading to its degradation. Ubiquitinated by ITCH at the cell membrane on agonist stimulation. The ubiquitin-dependent mechanism, endosomal sorting complex required for transport (ESCRT), then targets CXCR4 for lysosomal degradation. This process is dependent also on prior Ser-/Thr-phosphorylation in the C-terminal of CXCR4. Also binding of ARRB1 to STAM negatively regulates CXCR4 sorting to lysosomes though modulating ubiquitination of SFR5S. Post-translationally, sulfation is required for efficient binding of CXCL12/SDF-1alpha and promotes its dimerization. O- and N-glycosylated. N-glycosylation can mask coreceptor function. The O-glycosylation chondroitin sulfate attachment does not affect interaction with CXCL12/SDF-1alpha nor its coreceptor activity.

Its subcellular location is the cell membrane. The protein resides in the cell junction. The protein localises to the early endosome. It is found in the late endosome. It localises to the lysosome. Functionally, receptor for the C-X-C chemokine CXCL12/SDF-1 that transduces a signal by increasing intracellular calcium ion levels and enhancing MAPK1/MAPK3 activation. Involved in the AKT signaling cascade. Plays a role in regulation of cell migration, e.g. during wound healing. Acts as a receptor for extracellular ubiquitin; leading to enhanced intracellular calcium ions and reduced cellular cAMP levels. Binds bacterial lipopolysaccharide (LPS) et mediates LPS-induced inflammatory response, including TNF secretion by monocytes. Involved in hematopoiesis and in cardiac ventricular septum formation. Also plays an essential role in vascularization of the gastrointestinal tract, probably by regulating vascular branching and/or remodeling processes in endothelial cells. Involved in cerebellar development. In the CNS, could mediate hippocampal-neuron survival. This chain is C-X-C chemokine receptor type 4 (CXCR4), found in Macaca mulatta (Rhesus macaque).